A 482-amino-acid chain; its full sequence is tRNA sulfurtransferase (482 aa).

The THUMP domain occupies 61–165 (DVTLSVLTQT…NDKLNLIIAR (105 aa)). ATP is bound by residues 183–184 (LI), Lys265, Gly287, and Gln296. Cys344 and Cys456 are disulfide-bonded. The region spanning 404-482 (LGSDVVVLDI…GYKNVKVYRP (79 aa)) is the Rhodanese domain. Cys456 (cysteine persulfide intermediate) is an active-site residue.

The protein belongs to the ThiI family.

The protein localises to the cytoplasm. The catalysed reaction is [ThiI sulfur-carrier protein]-S-sulfanyl-L-cysteine + a uridine in tRNA + 2 reduced [2Fe-2S]-[ferredoxin] + ATP + H(+) = [ThiI sulfur-carrier protein]-L-cysteine + a 4-thiouridine in tRNA + 2 oxidized [2Fe-2S]-[ferredoxin] + AMP + diphosphate. It carries out the reaction [ThiS sulfur-carrier protein]-C-terminal Gly-Gly-AMP + S-sulfanyl-L-cysteinyl-[cysteine desulfurase] + AH2 = [ThiS sulfur-carrier protein]-C-terminal-Gly-aminoethanethioate + L-cysteinyl-[cysteine desulfurase] + A + AMP + 2 H(+). The protein operates within cofactor biosynthesis; thiamine diphosphate biosynthesis. Its function is as follows. Catalyzes the ATP-dependent transfer of a sulfur to tRNA to produce 4-thiouridine in position 8 of tRNAs, which functions as a near-UV photosensor. Also catalyzes the transfer of sulfur to the sulfur carrier protein ThiS, forming ThiS-thiocarboxylate. This is a step in the synthesis of thiazole, in the thiamine biosynthesis pathway. The sulfur is donated as persulfide by IscS. The chain is tRNA sulfurtransferase from Aliivibrio fischeri (strain MJ11) (Vibrio fischeri).